The following is an 87-amino-acid chain: Small ribosomal subunit protein bS20 (87 aa).

The protein belongs to the bacterial ribosomal protein bS20 family.

Binds directly to 16S ribosomal RNA. This Shigella flexneri serotype 5b (strain 8401) protein is Small ribosomal subunit protein bS20.